A 1605-amino-acid chain; its full sequence is Ribosome-binding protein 1 (1605 aa).

Topologically, residues 1-7 (MDIYDTQ) are lumenal. A helical membrane pass occupies residues 8–28 (TLGVVVFGGFMVVSAIGIFLV). The Cytoplasmic portion of the chain corresponds to 29-1605 (STFSMKETSY…GSSSKEGTSV (1577 aa)). Positions 44 to 88 (NQRKEMAKTHHQKGEKKKKEKTVEKKGKTKKKEEKPNGKIPEHDL) are disordered. Over residues 52–63 (THHQKGEKKKKE) the composition is skewed to basic residues. Residues 64 to 88 (KTVEKKGKTKKKEEKPNGKIPEHDL) show a composition bias toward basic and acidic residues. S111 is modified (phosphoserine). The segment at 114 to 150 (SSVGHTPIATVPAMPQEKLASSPKDRKKKEKKVAKVE) is disordered. Residue K148 forms a Glycyl lysine isopeptide (Lys-Gly) (interchain with G-Cter in SUMO2) linkage. 2 positions are modified to phosphoserine: S159 and S165. The segment at 172-849 (ATPKEVPMVA…PGPPDCDGPL (678 aa)) is disordered. 61 repeat units span residues 196-205 (SQGKKGQGAQ), 206-215 (NQAKKGEGAQ), 216-225 (NQGKKGEGAQ), 226-235 (NQAKKGEGAQ), 236-245 (NQAKKGEGAQ), 246-255 (NQGKKGEGAQ), 256-265 (NQAKKGEGGQ), 266-275 (NQAKKGEGAQ), 276-285 (NQGKKGEGAQ), 286-295 (NQGKKGEGAQ), 296-305 (NQAKKGEGAQ), 306-315 (NQAKKGEGAQ), 316-325 (NQGKKGEGAQ), 326-335 (NQSKKGEGAQ), 336-345 (NQAKKGEGGQ), 346-355 (NQAKKGEGAQ), 356-365 (NQAKKGEGAQ), 366-375 (NQAKKGEGVQ), 376-385 (NQAKKGVEGA), 386-395 (QNQGKKGEAN), 396-405 (QNQAKKGEGG), 406-415 (QNQTKKGEGP), 416-425 (QNQGKKGEAA), 426-435 (QKQDKKIEGA), 436-445 (QNQGKKPEGT), 446-455 (SNQGKKGEGA), 456-465 (QNQGKKGEGA), 466-475 (QNQSKKGEGA), 476-485 (QNQAKKGEGG), 486-495 (QNQAKKGEGA), 496-505 (QNQAKKGEGA), 506-515 (QNQAKKGEGV), 516-525 (QNQAKKGVEG), 527-536 (QNQGKKGEAN), 537-546 (QNQAKKGEGG), 547-556 (QNQTKKGEGP), 557-566 (QNQGKKGEAA), 567-576 (QKQDKKIEGA), 577-586 (QNQGKKPEGT), 587-596 (SNQGKKGEGA), 597-606 (QNQGKKGEGA), 607-616 (QNQGKKGEGA), 617-626 (QNQGKKGEGA), 628-637 (NQGKKGEGAQ), 638-647 (NQGKKGEGAQ), 648-657 (NQGKKGEGAQ), 658-667 (NQGKKGEGPQ), 668-677 (NQAKKGEGAQ), 678-687 (NQGKKGEGAQ), 688-697 (NQGKKGEGAQ), 698-707 (NQGKKAEGVQ), 708-717 (SQSKKGEGTQ), 718-727 (NQGKKGDGNP), 729-738 (QGKKGEGASN), 739-748 (QNRKTDTVAN), 749-758 (QGTKQEGVSN), 759-768 (QVKKSEGSPN), 769-778 (QGKKAEGAPN), 779-788 (QGKKKDGSPS), 789-798 (QAKKVDAAAN), and 799-808 (QGKKSEMAPA). Positions 196 to 808 (SQGKKGQGAQ…QGKKSEMAPA (613 aa)) are 61 X 10 AA tandem repeats of [NSQ]-[NKQVGA]-[GSAQKRT]-[ASGDTK]-[KGTQSAV]-[KGAED]-[EQVGIPTDMA]-[EGVAS]-[AGVPETNS]-[AQNGPTVS]. Over residues 197–208 (QGKKGQGAQNQA) the composition is skewed to low complexity. Polar residues-rich tracts occupy residues 224–258 (AQNQ…QNQA), 274–338 (AQNQ…QNQA), 354–378 (AQNQ…QNQA), and 385–399 (AQNQ…QNQA). The span at 420–433 (KKGEAAQKQDKKIE) shows a compositional bias: basic and acidic residues. Composition is skewed to polar residues over residues 435 to 479 (AQNQ…QNQA), 495 to 519 (AQNQ…QNQA), and 526 to 540 (AQNQ…QNQA). Over residues 561 to 574 (KKGEAAQKQDKKIE) the composition is skewed to basic and acidic residues. 2 stretches are compositionally biased toward polar residues: residues 576 to 720 (AQNQ…QNQG) and 736 to 769 (ASNQ…SPNQ). S786 carries the post-translational modification Phosphoserine. Residues 811–821 (QKASMVQSQEA) show a composition bias toward polar residues. S818 carries the post-translational modification Phosphoserine. A Glycyl lysine isopeptide (Lys-Gly) (interchain with G-Cter in SUMO1) cross-link involves residue K823. K1135 is modified (N6-acetyllysine). S1162 and S1178 each carry phosphoserine. 2 disordered regions span residues 1460–1481 (MRSH…AEQD) and 1571–1605 (TTQE…GTSV). The span at 1576-1598 (LTKEKDTVKKLQEQLGKAEDGSS) shows a compositional bias: basic and acidic residues.

Widely expressed.

Its subcellular location is the endoplasmic reticulum membrane. Its function is as follows. Acts as a ribosome receptor and mediates interaction between the ribosome and the endoplasmic reticulum membrane. This is Ribosome-binding protein 1 (Rrbp1) from Mus musculus (Mouse).